A 241-amino-acid chain; its full sequence is Probable WRKY transcription factor 63 (241 aa).

The interval 56-79 (NSPNRQPHHESSSRDMAGLVPQRS) is disordered. A DNA-binding region (WRKY) is located at residues 97 to 165 (SPNPRLDDGF…YLGQHTCKAF (69 aa)).

Belongs to the WRKY group III family.

The protein resides in the nucleus. In terms of biological role, transcription factor. Interacts specifically with the W box (5'-(T)TGAC[CT]-3'), a frequently occurring elicitor-responsive cis-acting element. This chain is Probable WRKY transcription factor 63 (WRKY63), found in Arabidopsis thaliana (Mouse-ear cress).